A 258-amino-acid polypeptide reads, in one-letter code: NAD kinase (258 aa).

Residue D44 is the Proton acceptor of the active site. Residues D44 to G45, N116 to E117, D146, A154, and T157 to S162 contribute to the NAD(+) site.

It belongs to the NAD kinase family. The cofactor is a divalent metal cation.

The protein localises to the cytoplasm. It catalyses the reaction NAD(+) + ATP = ADP + NADP(+) + H(+). Involved in the regulation of the intracellular balance of NAD and NADP, and is a key enzyme in the biosynthesis of NADP. Catalyzes specifically the phosphorylation on 2'-hydroxyl of the adenosine moiety of NAD to yield NADP. The sequence is that of NAD kinase from Zymomonas mobilis subsp. mobilis (strain ATCC 31821 / ZM4 / CP4).